Consider the following 253-residue polypeptide: Imidazole glycerol phosphate synthase subunit HisF (253 aa).

Active-site residues include Asp-11 and Asp-130.

It belongs to the HisA/HisF family. As to quaternary structure, heterodimer of HisH and HisF.

It is found in the cytoplasm. It carries out the reaction 5-[(5-phospho-1-deoxy-D-ribulos-1-ylimino)methylamino]-1-(5-phospho-beta-D-ribosyl)imidazole-4-carboxamide + L-glutamine = D-erythro-1-(imidazol-4-yl)glycerol 3-phosphate + 5-amino-1-(5-phospho-beta-D-ribosyl)imidazole-4-carboxamide + L-glutamate + H(+). It participates in amino-acid biosynthesis; L-histidine biosynthesis; L-histidine from 5-phospho-alpha-D-ribose 1-diphosphate: step 5/9. Functionally, IGPS catalyzes the conversion of PRFAR and glutamine to IGP, AICAR and glutamate. The HisF subunit catalyzes the cyclization activity that produces IGP and AICAR from PRFAR using the ammonia provided by the HisH subunit. The polypeptide is Imidazole glycerol phosphate synthase subunit HisF (Clostridium beijerinckii (strain ATCC 51743 / NCIMB 8052) (Clostridium acetobutylicum)).